A 796-amino-acid polypeptide reads, in one-letter code: Inactive dipeptidyl peptidase 10 (796 aa).

Topologically, residues 1–34 (MNQTASVSHHIKCQPSKTIKELGSNSPPQRNWKG) are cytoplasmic. The interval 1-56 (MNQTASVSHHIKCQPSKTIKELGSNSPPQRNWKGIAIALLVILVVCSLITMSVILL) is mediates effects on KCND2. The helical; Signal-anchor for type II membrane protein transmembrane segment at 35–55 (IAIALLVILVVCSLITMSVIL) threads the bilayer. The Extracellular portion of the chain corresponds to 56 to 796 (LTPDELTNSS…VLPQEPEEDE (741 aa)). 3 N-linked (GlcNAc...) asparagine glycosylation sites follow: Asn90, Asn111, and Asn119. A phosphotyrosine mark is found at Tyr138 and Tyr143. 3 N-linked (GlcNAc...) asparagine glycosylation sites follow: Asn257, Asn342, and Asn748.

This sequence belongs to the peptidase S9B family. DPPIV subfamily. As to quaternary structure, may form oligomers. Interacts with KCND1. Interacts with KCND2. N-glycosylation is important for cell surface expression, specially at Asn-257, which is crucial. As to expression, found in serum, T-cells and brain (at protein level). Expressed in brain, pancreas, spinal cord and adrenal glands.

It localises to the cell membrane. Functionally, promotes cell surface expression of the potassium channel KCND2. Modulates the activity and gating characteristics of the potassium channel KCND2. Has no dipeptidyl aminopeptidase activity. The sequence is that of Inactive dipeptidyl peptidase 10 (DPP10) from Homo sapiens (Human).